Here is a 325-residue protein sequence, read N- to C-terminus: Small ribosomal subunit protein uS2 (325 aa).

Over residues 212–226 (KEEQAKAEAERERLA) the composition is skewed to basic and acidic residues. The disordered stretch occupies residues 212–325 (KEEQAKAEAE…TEPKASTGNW (114 aa)). 2 stretches are compositionally biased toward low complexity: residues 234-247 (QPAAPQQDPDQWAD) and 261-289 (PVTTAPVPTGGAPPVASTTATPATNTGSG). Residues 290–300 (FNQDDWSVPTT) show a composition bias toward polar residues.

The protein belongs to the universal ribosomal protein uS2 family. As to quaternary structure, component of the small ribosomal subunit. Mature ribosomes consist of a small (40S) and a large (60S) subunit. The 40S subunit contains about 33 different proteins and 1 molecule of RNA (18S). The 60S subunit contains about 49 different proteins and 3 molecules of RNA (28S, 5.8S and 5S). Interacts with ribosomal protein S21.

Its subcellular location is the cytoplasm. Required for the assembly and/or stability of the 40S ribosomal subunit. Required for the processing of the 20S rRNA-precursor to mature 18S rRNA in a late step of the maturation of 40S ribosomal subunits. The sequence is that of Small ribosomal subunit protein uS2 from Suberites domuncula (Sponge).